Here is an 80-residue protein sequence, read N- to C-terminus: Small ribosomal subunit protein bS18 (80 aa).

It belongs to the bacterial ribosomal protein bS18 family. In terms of assembly, part of the 30S ribosomal subunit. Forms a tight heterodimer with protein bS6.

Its function is as follows. Binds as a heterodimer with protein bS6 to the central domain of the 16S rRNA, where it helps stabilize the platform of the 30S subunit. The chain is Small ribosomal subunit protein bS18 from Methylocella silvestris (strain DSM 15510 / CIP 108128 / LMG 27833 / NCIMB 13906 / BL2).